The sequence spans 1135 residues: Protocadherin-18 (1135 aa).

The signal sequence occupies residues 1–27 (MHQMNAKMHFRFVFALLIVSFNHDVLG). Cadherin domains lie at 28-137 (KNLK…SPQF), 138-246 (SRSL…SPAF), 247-354 (EQQS…KPEI), 361-465 (PGKE…PPHF), 466-576 (QRSR…VPVV), and 582-688 (RNNT…STAM). The Extracellular segment spans residues 28–699 (KNLKYRIYEE…SVSQASLDVS (672 aa)). N-linked (GlcNAc...) asparagine glycosylation is present at Asn103. Asn269, Asn420, Asn559, Asn583, and Asn641 each carry an N-linked (GlcNAc...) asparagine glycan. Residues 700-720 (MIIIISLGAICAVLLVIMVLF) traverse the membrane as a helical segment. Residues 721–1135 (ATRCNREKKD…NKLLQDVRQS (415 aa)) are Cytoplasmic-facing. Disordered stretches follow at residues 769-800 (LPIRSHHRSSPSSSPTLERGQMGSRQSHNSHQ), 869-889 (SLKDSGRGDSEAGDSDYDLGR), 942-1003 (DYRS…STSS), and 1023-1046 (YSECSEVDRSNSLERRKGPLPAKT). A compositionally biased stretch (polar residues) spans 791–800 (GSRQSHNSHQ). Residues 869–878 (SLKDSGRGDS) are compositionally biased toward basic and acidic residues. The interaction with DAB1 stretch occupies residues 893-1135 (IDRLLGEGFS…NKLLQDVRQS (243 aa)). The segment covering 1028–1039 (EVDRSNSLERRK) has biased composition (basic and acidic residues).

In terms of assembly, interacts with DAB1. Expressed in all tissues, with highest expression in lung and ovary.

It is found in the cell membrane. In terms of biological role, potential calcium-dependent cell-adhesion protein. This Homo sapiens (Human) protein is Protocadherin-18 (PCDH18).